The sequence spans 93 residues: Putative pterin-4-alpha-carbinolamine dehydratase (93 aa).

The protein belongs to the pterin-4-alpha-carbinolamine dehydratase family.

It catalyses the reaction (4aS,6R)-4a-hydroxy-L-erythro-5,6,7,8-tetrahydrobiopterin = (6R)-L-erythro-6,7-dihydrobiopterin + H2O. The polypeptide is Putative pterin-4-alpha-carbinolamine dehydratase (Roseiflexus castenholzii (strain DSM 13941 / HLO8)).